A 249-amino-acid chain; its full sequence is MKKSIIIPALDLIEGQVVRLYQGDYAQQTLYSDNPIAQFQCYVDQGAQQLHLVDLTGAKDPVKRQTELIGKIIEATKCKIQVGGGIRTEQDVADLLAVGANRVVIGSTAVKRPEMVKGWFEKYGAEKFVLALDVNIDASGQKIIAVSGWQEASGVSLEELIEDYQSVGLQHVLCTDISRDGTLAGSNVNLYKEICTKYPEIQFQSSGGIGSLADIAALKGLGVAGVIVGRALLEGKFNVAEAIECWQNG.

Catalysis depends on Asp-11, which acts as the Proton acceptor. Asp-133 (proton donor) is an active-site residue.

It belongs to the HisA/HisF family.

Its subcellular location is the cytoplasm. The enzyme catalyses 1-(5-phospho-beta-D-ribosyl)-5-[(5-phospho-beta-D-ribosylamino)methylideneamino]imidazole-4-carboxamide = 5-[(5-phospho-1-deoxy-D-ribulos-1-ylimino)methylamino]-1-(5-phospho-beta-D-ribosyl)imidazole-4-carboxamide. It participates in amino-acid biosynthesis; L-histidine biosynthesis; L-histidine from 5-phospho-alpha-D-ribose 1-diphosphate: step 4/9. The protein is 1-(5-phosphoribosyl)-5-[(5-phosphoribosylamino)methylideneamino] imidazole-4-carboxamide isomerase of Actinobacillus succinogenes (strain ATCC 55618 / DSM 22257 / CCUG 43843 / 130Z).